The following is a 4513-amino-acid chain: Dynein-1-beta heavy chain, flagellar inner arm I1 complex (4513 aa).

The interval M1 to Y1806 is stem. Coiled coils occupy residues K192–D223, T1544–F1577, and T1704–K1727. AAA stretches follow at residues Y1807 to R2028, R2089 to N2350, F2458 to G2706, and D2808 to R3059. ATP contacts are provided by residues G1845–T1852, G2127–S2134, G2497–T2504, and G2848–K2855. 3 coiled-coil regions span residues A3107 to K3193, K3301 to E3384, and R3499 to Q3519. Positions A3107–E3384 are stalk. 2 AAA regions span residues L3443 to A3674 and A3890 to S4109.

As to quaternary structure, the I1 inner arm complex (also known as the f dynein complex) is a two-headed isoform composed of two heavy chains (1-alpha and 1-beta), three intermediate chains and three light chains. I1 occupies a specific position proximal to the first radial spoke and repeats every 96 nm along the length of the axoneme.

The protein localises to the cell projection. It localises to the cilium. It is found in the flagellum. Its subcellular location is the cytoplasm. The protein resides in the cytoskeleton. The protein localises to the flagellum axoneme. In terms of biological role, force generating protein of eukaryotic cilia and flagella. Produces force towards the minus ends of microtubules. Dynein has ATPase activity; the force-producing power stroke is thought to occur on release of ADP. Required for assembly of the I1 inner arm complex and its targeting to the appropriate axoneme location. Also required for phototaxis. In Chlamydomonas reinhardtii (Chlamydomonas smithii), this protein is Dynein-1-beta heavy chain, flagellar inner arm I1 complex (DHC10).